The chain runs to 404 residues: Serine/threonine transporter SstT (404 aa).

Helical transmembrane passes span Ile-17–Phe-37, Ile-39–Leu-59, Met-75–Leu-95, Ala-138–Leu-158, Ile-179–Ile-199, Phe-212–Ile-232, Ile-287–Leu-307, and Phe-313–Ala-333.

This sequence belongs to the dicarboxylate/amino acid:cation symporter (DAACS) (TC 2.A.23) family.

Its subcellular location is the cell membrane. The catalysed reaction is L-serine(in) + Na(+)(in) = L-serine(out) + Na(+)(out). It catalyses the reaction L-threonine(in) + Na(+)(in) = L-threonine(out) + Na(+)(out). Its function is as follows. Involved in the import of serine and threonine into the cell, with the concomitant import of sodium (symport system). The sequence is that of Serine/threonine transporter SstT from Streptococcus pyogenes serotype M2 (strain MGAS10270).